A 703-amino-acid chain; its full sequence is WPP domain-interacting tail-anchored protein 1 (703 aa).

Over residues 1-12 the composition is skewed to basic and acidic residues; the sequence is METETEHDRTVS. 2 disordered regions span residues 1 to 27 and 86 to 107; these read METETEHDRTVSVDDNDSLVPEPSSTK and FVSKKEEDEEEPSSNVDDDDDS. The span at 92 to 107 shows a compositional bias: acidic residues; that stretch reads EDEEEPSSNVDDDDDS. Residues 118–183 adopt a coiled-coil conformation; it reads SSILNSEVKE…MEQVVEMKKQ (66 aa). The segment at 189–208 is disordered; sequence RLSSGLDEQGSWSGGQTSVS. A compositionally biased stretch (polar residues) spans 198–208; the sequence is GSWSGGQTSVS. 3 coiled-coil regions span residues 236–265, 318–461, and 500–604; these read LEKSLAKEMELEKKLSESRNTERELEMKLY, KRED…RDKG, and STVS…SREN. Residues 679 to 699 form a helical membrane-spanning segment; the sequence is FKHILVAILVILISSIAYVIS.

Homodimer. Component of Ran complexes at least composed of WIT1 or WIT2, RANGAP1 or RANGAP2, and WIP1 or WIP2 or WIP3. Interacts with WIP2, WPP1/MAF1, WPP2/MAF2, RANGAP1 and RANGAP2. Component of a ternary complex composed of WPP1, HSP70-1 and WIT1. Interacts with KAKU1. Interacts with WIP1. Ubiquitous.

The protein localises to the nucleus envelope. It localises to the nucleus membrane. In terms of biological role, together with WIT2, required for the nuclear envelope docking of RANGAP proteins in root tips. This is WPP domain-interacting tail-anchored protein 1 (WIT1) from Arabidopsis thaliana (Mouse-ear cress).